The sequence spans 94 residues: C-C motif chemokine 17 (94 aa).

Residues 1 to 23 (MAPLKMLALVTLLLGASLQHIHA) form the signal peptide. 2 cysteine pairs are disulfide-bonded: Cys-33-Cys-57 and Cys-34-Cys-73.

It belongs to the intercrine beta (chemokine CC) family. As to expression, constitutively expressed in thymus. Detected at lower levels in the lung, colon and small intestine. Expressed in stimulated peripheral blood mononuclear cells, but not in resting cells.

The protein localises to the secreted. Its function is as follows. Chemokine, which displays chemotactic activity for T lymphocytes, preferentially Th2 cells, but not monocytes or granulocytes. Therefore plays an important role in a wide range of inflammatory and immunological processes. Acts by binding to CCR4 at T-cell surface. Mediates GM-CSF/CSF2-driven pain and inflammation. In the brain, required to maintain the typical, highly branched morphology of hippocampal microglia under homeostatic conditions. May be important for the appropriate adaptation of microglial morphology and synaptic plasticity to acute lipopolysaccharide (LPS)-induced neuroinflammation. Plays a role in wound healing, mainly by inducing fibroblast migration into the wound. The protein is C-C motif chemokine 17 (CCL17) of Homo sapiens (Human).